The following is a 208-amino-acid chain: Protein-L-isoaspartate O-methyltransferase (208 aa).

Ser59 is an active-site residue.

Belongs to the methyltransferase superfamily. L-isoaspartyl/D-aspartyl protein methyltransferase family.

The protein localises to the cytoplasm. The catalysed reaction is [protein]-L-isoaspartate + S-adenosyl-L-methionine = [protein]-L-isoaspartate alpha-methyl ester + S-adenosyl-L-homocysteine. In terms of biological role, catalyzes the methyl esterification of L-isoaspartyl residues in peptides and proteins that result from spontaneous decomposition of normal L-aspartyl and L-asparaginyl residues. It plays a role in the repair and/or degradation of damaged proteins. The polypeptide is Protein-L-isoaspartate O-methyltransferase (Klebsiella pneumoniae subsp. pneumoniae (strain ATCC 700721 / MGH 78578)).